A 264-amino-acid polypeptide reads, in one-letter code: Thymidylate synthase (264 aa).

DUMP is bound at residue arginine 21. A (6R)-5,10-methylene-5,6,7,8-tetrahydrofolate-binding site is contributed by histidine 51. 126-127 (RR) contacts dUMP. The active-site Nucleophile is the cysteine 146. DUMP-binding positions include 166–169 (RSAD), asparagine 177, and 207–209 (HIY). Residue aspartate 169 coordinates (6R)-5,10-methylene-5,6,7,8-tetrahydrofolate. A (6R)-5,10-methylene-5,6,7,8-tetrahydrofolate-binding site is contributed by alanine 263.

Belongs to the thymidylate synthase family. Bacterial-type ThyA subfamily. In terms of assembly, homodimer.

The protein localises to the cytoplasm. It carries out the reaction dUMP + (6R)-5,10-methylene-5,6,7,8-tetrahydrofolate = 7,8-dihydrofolate + dTMP. Its pathway is pyrimidine metabolism; dTTP biosynthesis. Its function is as follows. Catalyzes the reductive methylation of 2'-deoxyuridine-5'-monophosphate (dUMP) to 2'-deoxythymidine-5'-monophosphate (dTMP) while utilizing 5,10-methylenetetrahydrofolate (mTHF) as the methyl donor and reductant in the reaction, yielding dihydrofolate (DHF) as a by-product. This enzymatic reaction provides an intracellular de novo source of dTMP, an essential precursor for DNA biosynthesis. The protein is Thymidylate synthase of Bacteroides fragilis (strain ATCC 25285 / DSM 2151 / CCUG 4856 / JCM 11019 / LMG 10263 / NCTC 9343 / Onslow / VPI 2553 / EN-2).